A 414-amino-acid polypeptide reads, in one-letter code: 3-oxo-tetronate kinase (414 aa).

ATP contacts are provided by residues S255, 355 to 358 (GGET), and G398.

It belongs to the four-carbon acid sugar kinase family.

It carries out the reaction 3-dehydro-L-erythronate + ATP = 3-dehydro-4-O-phospho-L-erythronate + ADP + H(+). The enzyme catalyses 3-dehydro-D-erythronate + ATP = 3-dehydro-4-O-phospho-D-erythronate + ADP + H(+). In terms of biological role, catalyzes the ATP-dependent phosphorylation of 3-oxo-tetronate to 3-oxo-tetronate 4-phosphate. In Actinobacillus succinogenes (strain ATCC 55618 / DSM 22257 / CCUG 43843 / 130Z), this protein is 3-oxo-tetronate kinase.